The chain runs to 358 residues: UDP-3-O-acylglucosamine N-acyltransferase (358 aa).

His-248 serves as the catalytic Proton acceptor.

Belongs to the transferase hexapeptide repeat family. LpxD subfamily. In terms of assembly, homotrimer.

The enzyme catalyses a UDP-3-O-[(3R)-3-hydroxyacyl]-alpha-D-glucosamine + a (3R)-hydroxyacyl-[ACP] = a UDP-2-N,3-O-bis[(3R)-3-hydroxyacyl]-alpha-D-glucosamine + holo-[ACP] + H(+). It functions in the pathway bacterial outer membrane biogenesis; LPS lipid A biosynthesis. Functionally, catalyzes the N-acylation of UDP-3-O-acylglucosamine using 3-hydroxyacyl-ACP as the acyl donor. Is involved in the biosynthesis of lipid A, a phosphorylated glycolipid that anchors the lipopolysaccharide to the outer membrane of the cell. This is UDP-3-O-acylglucosamine N-acyltransferase from Synechococcus sp. (strain WH7803).